The chain runs to 323 residues: Putative divalent cation/proton antiporter TMEM165 (323 aa).

The first 33 residues, 1–33, serve as a signal peptide directing secretion; that stretch reads MAASARGSGRAPTRRLLVLLLLPLLWAPAGVRA. At 34–88 the chain is on the lumenal side; that stretch reads GPEEDLSHRNQEPPAPAQQLQPQPAAVQGLEPARAEKGFTPAAPVHTNREDAATQ. A compositionally biased stretch (basic and acidic residues) spans 35-44; the sequence is PEEDLSHRNQ. Residues 35–60 form a disordered region; the sequence is PEEDLSHRNQEPPAPAQQLQPQPAAV. The span at 50 to 59 shows a compositional bias: low complexity; sequence AQQLQPQPAA. Residues 89–109 traverse the membrane as a helical segment; sequence ANLGFIHAFVAAISVIIVSEL. At 110 to 126 the chain is on the cytoplasmic side; it reads GDKTFFIAAIMAMRYNR. Residues 127–147 traverse the membrane as a helical segment; it reads LTVLAGAMLALALMTCLSVLF. Residues 148 to 151 are Lumenal-facing; sequence GYAT. A helical transmembrane segment spans residues 152-172; it reads TVIPRVYTYYVSTALFAIFGI. Topologically, residues 173–227 are cytoplasmic; the sequence is RMLREGLKMSPDEGQEELEEVQAELKKKDEEFQRTKLLNGPDVETGTSTAIPQKK. Positions 184-211 form a coiled coil; that stretch reads DEGQEELEEVQAELKKKDEEFQRTKLLN. The helical transmembrane segment at 228–248 threads the bilayer; it reads WLHFISPIFVQALTLTFLAEW. The Lumenal segment spans residues 249-266; sequence GDRSQLTTIVLAAREDPY. The chain crosses the membrane as a helical span at residues 267 to 287; the sequence is GVAVGGTVGHCLCTGLAVIGG. The Cytoplasmic portion of the chain corresponds to 288–298; that stretch reads RMIAQKISVRT. Residues 299–319 form a helical membrane-spanning segment; that stretch reads VTIIGGIVFLAFAFSALFISP. Residues 320–323 are Lumenal-facing; it reads ESGF.

This sequence belongs to the GDT1 family.

Its subcellular location is the golgi apparatus membrane. The enzyme catalyses Ca(2+)(in) + n H(+)(out) = Ca(2+)(out) + n H(+)(in). It carries out the reaction Mn(2+)(in) + n H(+)(out) = Mn(2+)(out) + n H(+)(in). Functionally, putative divalent cation:proton antiporter that exchanges calcium or manganese ions for protons across the Golgi membrane. Mediates the reversible transport of calcium or manganese to the Golgi lumen driven by the proton gradient and possibly the membrane potential generated by V-ATPase. Provides calcium or manganese cofactors to resident Golgi enzymes and contributes to the maintenance of an acidic luminal Golgi pH required for proper functioning of the secretory pathway. Promotes Ca(2+) storage within the Golgi lumen of the mammary epithelial cells to be then secreted into milk. The transport mechanism and stoichiometry remains to be elucidated. In Rattus norvegicus (Rat), this protein is Putative divalent cation/proton antiporter TMEM165.